The primary structure comprises 347 residues: tRNA N6-adenosine threonylcarbamoyltransferase (347 aa).

Fe cation is bound by residues histidine 113 and histidine 117. Substrate is bound by residues 136–140 (IVSGG), aspartate 170, glycine 183, aspartate 187, and asparagine 282. Position 310 (aspartate 310) interacts with Fe cation.

The protein belongs to the KAE1 / TsaD family. It depends on Fe(2+) as a cofactor.

The protein localises to the cytoplasm. It carries out the reaction L-threonylcarbamoyladenylate + adenosine(37) in tRNA = N(6)-L-threonylcarbamoyladenosine(37) in tRNA + AMP + H(+). Functionally, required for the formation of a threonylcarbamoyl group on adenosine at position 37 (t(6)A37) in tRNAs that read codons beginning with adenine. Is involved in the transfer of the threonylcarbamoyl moiety of threonylcarbamoyl-AMP (TC-AMP) to the N6 group of A37, together with TsaE and TsaB. TsaD likely plays a direct catalytic role in this reaction. The chain is tRNA N6-adenosine threonylcarbamoyltransferase from Bifidobacterium adolescentis (strain ATCC 15703 / DSM 20083 / NCTC 11814 / E194a).